Reading from the N-terminus, the 280-residue chain is Orotidine 5'-phosphate decarboxylase (280 aa).

Catalysis depends on K96, which acts as the Proton donor.

It belongs to the OMP decarboxylase family. Type 2 subfamily.

It carries out the reaction orotidine 5'-phosphate + H(+) = UMP + CO2. The protein operates within pyrimidine metabolism; UMP biosynthesis via de novo pathway; UMP from orotate: step 2/2. The sequence is that of Orotidine 5'-phosphate decarboxylase from Parabacteroides distasonis (strain ATCC 8503 / DSM 20701 / CIP 104284 / JCM 5825 / NCTC 11152).